The primary structure comprises 81 residues: Photosystem I iron-sulfur center (81 aa).

4Fe-4S ferredoxin-type domains lie at 2–31 (AHSV…MVPW) and 39–68 (IASA…VRVY). [4Fe-4S] cluster is bound by residues C11, C14, C17, C21, C48, C51, C54, and C58.

In terms of assembly, the eukaryotic PSI reaction center is composed of at least 11 subunits. Requires [4Fe-4S] cluster as cofactor.

It is found in the plastid. The protein resides in the chloroplast thylakoid membrane. It catalyses the reaction reduced [plastocyanin] + hnu + oxidized [2Fe-2S]-[ferredoxin] = oxidized [plastocyanin] + reduced [2Fe-2S]-[ferredoxin]. Its function is as follows. Apoprotein for the two 4Fe-4S centers FA and FB of photosystem I (PSI); essential for photochemical activity. FB is the terminal electron acceptor of PSI, donating electrons to ferredoxin. The C-terminus interacts with PsaA/B/D and helps assemble the protein into the PSI complex. Required for binding of PsaD and PsaE to PSI. PSI is a plastocyanin-ferredoxin oxidoreductase, converting photonic excitation into a charge separation, which transfers an electron from the donor P700 chlorophyll pair to the spectroscopically characterized acceptors A0, A1, FX, FA and FB in turn. In Mesostigma viride (Green alga), this protein is Photosystem I iron-sulfur center.